Consider the following 302-residue polypeptide: Protoheme IX farnesyltransferase (302 aa).

Helical transmembrane passes span 28–48 (LALLMLTMYGAYFAGGGSLDP), 50–70 (MLALLTIMGFTSIGGVTAFNM), 93–115 (LNPYEALAGSLALVIAGVLSAAA), 119–138 (YVALTVIAGLYFDIIAYTQL), 147–167 (IIFGSIAGSMPALGGWAAAAG), 172–192 (GGVLMALIVFLWQPMHVWFLG), 219–239 (LIAVSLAGLIAVAWAFALYYG), 242–262 (FLTAVITTVLAALAISRIGGF), and 271–291 (ALKLFKFASPIIAVVFIILPL).

This sequence belongs to the UbiA prenyltransferase family. Protoheme IX farnesyltransferase subfamily.

It localises to the cell membrane. The catalysed reaction is heme b + (2E,6E)-farnesyl diphosphate + H2O = Fe(II)-heme o + diphosphate. It participates in porphyrin-containing compound metabolism; heme O biosynthesis; heme O from protoheme: step 1/1. Its function is as follows. Converts heme B (protoheme IX) to heme O by substitution of the vinyl group on carbon 2 of heme B porphyrin ring with a hydroxyethyl farnesyl side group. This chain is Protoheme IX farnesyltransferase, found in Aeropyrum pernix (strain ATCC 700893 / DSM 11879 / JCM 9820 / NBRC 100138 / K1).